The primary structure comprises 1173 residues: DNA-directed RNA polymerase subunit beta (1173 aa).

The disordered stretch occupies residues 1-23 (MEGSLLVASSTSNNETANTASTD). The span at 8 to 22 (ASSTSNNETANTAST) shows a compositional bias: low complexity.

Belongs to the RNA polymerase beta chain family. As to quaternary structure, the RNAP catalytic core consists of 2 alpha, 1 beta, 1 beta' and 1 omega subunit. When a sigma factor is associated with the core the holoenzyme is formed, which can initiate transcription.

The catalysed reaction is RNA(n) + a ribonucleoside 5'-triphosphate = RNA(n+1) + diphosphate. Its function is as follows. DNA-dependent RNA polymerase catalyzes the transcription of DNA into RNA using the four ribonucleoside triphosphates as substrates. This chain is DNA-directed RNA polymerase subunit beta, found in Paenarthrobacter aurescens (strain TC1).